The chain runs to 98 residues: Protein E7 (98 aa).

Positions M1 to K42 are E7 terminal domain. The LXCXE motif; interaction with host RB1 and TMEM173/STING signature appears at L23–E27. A zinc finger lies at C58–C94. Residues I76–L84 carry the Nuclear export signal motif.

This sequence belongs to the papillomaviridae E7 protein family. As to quaternary structure, homodimer. Homooligomer. Interacts with host RB1; this interaction induces dissociation of RB1-E2F1 complex thereby disrupting RB1 activity. Interacts with host EP300; this interaction represses EP300 transcriptional activity. Interacts with protein E2; this interaction inhibits E7 oncogenic activity. Interacts with host TMEM173/STING; this interaction impairs the ability of TMEM173/STING to sense cytosolic DNA and promote the production of type I interferon (IFN-alpha and IFN-beta). Interacts with host ZUBR1. Highly phosphorylated.

The protein localises to the host cytoplasm. The protein resides in the host nucleus. Its function is as follows. Plays a role in viral genome replication by driving entry of quiescent cells into the cell cycle. Stimulation of progression from G1 to S phase allows the virus to efficiently use the cellular DNA replicating machinery to achieve viral genome replication. E7 protein has both transforming and trans-activating activities. Induces the disassembly of the E2F1 transcription factor from RB1, with subsequent transcriptional activation of E2F1-regulated S-phase genes. Interferes with host histone deacetylation mediated by HDAC1 and HDAC2, leading to transcription activation. Also plays a role in the inhibition of both antiviral and antiproliferative functions of host interferon alpha. Interaction with host TMEM173/STING impairs the ability of TMEM173/STING to sense cytosolic DNA and promote the production of type I interferon (IFN-alpha and IFN-beta). This chain is Protein E7, found in Homo sapiens (Human).